We begin with the raw amino-acid sequence, 273 residues long: Shikimate dehydrogenase (NADP(+)) (273 aa).

Shikimate contacts are provided by residues 14–16 (SKS) and threonine 61. Lysine 65 functions as the Proton acceptor in the catalytic mechanism. Asparagine 86 and aspartate 102 together coordinate shikimate. NADP(+)-binding positions include 126–130 (GAGGA), 150–155 (NRTVAK), and methionine 213. Tyrosine 215 serves as a coordination point for shikimate. Glycine 237 contacts NADP(+).

It belongs to the shikimate dehydrogenase family. As to quaternary structure, homodimer.

It catalyses the reaction shikimate + NADP(+) = 3-dehydroshikimate + NADPH + H(+). Its pathway is metabolic intermediate biosynthesis; chorismate biosynthesis; chorismate from D-erythrose 4-phosphate and phosphoenolpyruvate: step 4/7. Its function is as follows. Involved in the biosynthesis of the chorismate, which leads to the biosynthesis of aromatic amino acids. Catalyzes the reversible NADPH linked reduction of 3-dehydroshikimate (DHSA) to yield shikimate (SA). The protein is Shikimate dehydrogenase (NADP(+)) of Tolumonas auensis (strain DSM 9187 / NBRC 110442 / TA 4).